Consider the following 482-residue polypeptide: tRNA(Ile)-lysidine synthase (482 aa).

ATP is bound at residue 28 to 33; the sequence is SGGPDS.

Belongs to the tRNA(Ile)-lysidine synthase family.

It is found in the cytoplasm. The catalysed reaction is cytidine(34) in tRNA(Ile2) + L-lysine + ATP = lysidine(34) in tRNA(Ile2) + AMP + diphosphate + H(+). In terms of biological role, ligates lysine onto the cytidine present at position 34 of the AUA codon-specific tRNA(Ile) that contains the anticodon CAU, in an ATP-dependent manner. Cytidine is converted to lysidine, thus changing the amino acid specificity of the tRNA from methionine to isoleucine. This is tRNA(Ile)-lysidine synthase from Symbiobacterium thermophilum (strain DSM 24528 / JCM 14929 / IAM 14863 / T).